A 34-amino-acid chain; its full sequence is uncharacterized protein (34 aa).

Residues L10–I30 form a helical membrane-spanning segment.

The protein localises to the membrane. This is an uncharacterized protein from Shigella flexneri.